The chain runs to 401 residues: Mitochondrial distribution and morphology protein 12 (401 aa).

The region spanning 1-401 is the SMP-LTD domain; the sequence is MSIDINWDTL…VYPSFWTFLV (401 aa). Residues 70–88 show a composition bias toward acidic residues; the sequence is YEEDEDYPDNEDDDDDEAG. Disordered regions lie at residues 70–95 and 190–247; these read YEED…NPRN and SLTL…EKSP. Positions 195-205 are enriched in low complexity; sequence PQSHPDPSSRP. Residues 209–220 are compositionally biased toward basic and acidic residues; sequence HQHDDERRRSLA.

It belongs to the MDM12 family. As to quaternary structure, component of the ER-mitochondria encounter structure (ERMES) or MDM complex, composed of MMM1, MDM10, MDM12 and MDM34. An MMM1 homodimer associates with one molecule of MDM12 on each side in a pairwise head-to-tail manner, and the SMP-LTD domains of MMM1 and MDM12 generate a continuous hydrophobic tunnel for phospholipid trafficking.

Its subcellular location is the mitochondrion outer membrane. The protein resides in the endoplasmic reticulum membrane. Its function is as follows. Component of the ERMES/MDM complex, which serves as a molecular tether to connect the endoplasmic reticulum (ER) and mitochondria. Components of this complex are involved in the control of mitochondrial shape and protein biogenesis, and function in nonvesicular lipid trafficking between the ER and mitochondria. MDM12 is required for the interaction of the ER-resident membrane protein MMM1 and the outer mitochondrial membrane-resident beta-barrel protein MDM10. The MDM12-MMM1 subcomplex functions in the major beta-barrel assembly pathway that is responsible for biogenesis of all mitochondrial outer membrane beta-barrel proteins, and acts in a late step after the SAM complex. The MDM10-MDM12-MMM1 subcomplex further acts in the TOM40-specific pathway after the action of the MDM12-MMM1 complex. Essential for establishing and maintaining the structure of mitochondria and maintenance of mtDNA nucleoids. The chain is Mitochondrial distribution and morphology protein 12 from Phaeosphaeria nodorum (strain SN15 / ATCC MYA-4574 / FGSC 10173) (Glume blotch fungus).